Reading from the N-terminus, the 683-residue chain is U4/U6 small nuclear ribonucleoprotein Prp3 (683 aa).

One can recognise a PWI domain in the interval 1–87 (MALSKRELDE…HSKSSSDRSR (87 aa)). Over residues 73-107 (GRSSRHSKSSSDRSRKRELKEVFGDDSEISKESSG) the composition is skewed to basic and acidic residues. Residues 73–135 (GRSSRHSKSS…IPGPPSESPG (63 aa)) form a disordered region. Residue K139 forms a Glycyl lysine isopeptide (Lys-Gly) (interchain with G-Cter in SUMO2) linkage. Residues 153-183 (IEERKKQLSFISPPTPQPKTPSSSQPERLPI) form a disordered region. S164 bears the Phosphoserine mark. T167 is modified (phosphothreonine). Residues K244 and K252 each participate in a glycyl lysine isopeptide (Lys-Gly) (interchain with G-Cter in SUMO2) cross-link. Residues 416–550 (NLVEHPAQLN…VHISVYRVRN (135 aa)) form a mediates interaction with SART3 region. A Phosphoserine modification is found at S619.

As to quaternary structure, component of the precatalytic spliceosome (spliceosome B complex). Component of the U4/U6-U5 tri-snRNP complex, a building block of the precatalytic spliceosome (spliceosome B complex). The U4/U6-U5 tri-snRNP complex is composed of the U4, U6 and U5 snRNAs and at least PRPF3, PRPF4, PRPF6, PRPF8, PRPF31, SNRNP200, TXNL4A, SNRNP40, SNRPB, SNRPD1, SNRPD2, SNRPD3, SNRPE, SNRPF, SNRPG, DDX23, CD2BP2, PPIH, SNU13, EFTUD2, SART1 and USP39, plus LSM2, LSM3, LSM4, LSM5, LSM6, LSM7 and LSM8. Interacts directly with PRPF4. Part of a heteromeric complex containing PPIH, PRPF3 and PRPF4 that is stable in the absence of RNA. Interacts with SART3; the interaction is direct and recruits the deubiquitinase USP4 to PRPF3. Interacts with PRPF19. Interacts ('Lys-63'-linked polyubiquitinated) with PRPF8 (via the MPN (JAB/Mov34) domain); may stabilize the U4/U6-U5 tri-snRNP complex. Interacts with ERCC6. In terms of processing, ubiquitinated. Undergoes 'Lys-63'-linked polyubiquitination by PRPF19 and deubiquitination by USP4. 'Lys-63'-linked ubiquitination increases the affinity for PRPF8 and may regulate the assembly of the U4/U6-U5 tri-snRNP complex. Highly expressed in retina, liver, kidney and blood. Detected at lower levels in heart and brain.

The protein resides in the nucleus. It localises to the nucleus speckle. Functionally, plays a role in pre-mRNA splicing as component of the U4/U6-U5 tri-snRNP complex that is involved in spliceosome assembly, and as component of the precatalytic spliceosome (spliceosome B complex). This is U4/U6 small nuclear ribonucleoprotein Prp3 (PRPF3) from Homo sapiens (Human).